Consider the following 275-residue polypeptide: Rhamnulose-1-phosphate aldolase (275 aa).

Glu117 is a catalytic residue. Zn(2+)-binding residues include His141, His143, and His212.

Belongs to the aldolase class II family. RhaD subfamily. In terms of assembly, homotetramer. It depends on Zn(2+) as a cofactor.

The protein localises to the cytoplasm. It catalyses the reaction L-rhamnulose 1-phosphate = (S)-lactaldehyde + dihydroxyacetone phosphate. It functions in the pathway carbohydrate degradation; L-rhamnose degradation; glycerone phosphate from L-rhamnose: step 3/3. Its function is as follows. Catalyzes the reversible cleavage of L-rhamnulose-1-phosphate to dihydroxyacetone phosphate (DHAP) and L-lactaldehyde. This Salmonella dublin (strain CT_02021853) protein is Rhamnulose-1-phosphate aldolase.